Here is a 664-residue protein sequence, read N- to C-terminus: Macoilin (664 aa).

Helical transmembrane passes span 28 to 48, 75 to 95, 120 to 140, and 154 to 174; these read TFLYLKFLVVWALVLLADFVL, AFSVFFVCVAFTSNIICLLFI, VCLPTVSLWILFVYIEAAIRF, and FAAHCIGYPVVTLGFGFKSYV. The span at 253 to 265 shows a compositional bias: basic and acidic residues; that stretch reads REKGKEKDKDAKK. The tract at residues 253-274 is disordered; that stretch reads REKGKEKDKDAKKHNLGINNNN. Serine 305 bears the Phosphoserine mark. Polar residues predominate over residues 320–348; sequence KNYKNASGVVNSSPRSHSATNGSIPSSSS. The segment at 320–375 is disordered; that stretch reads KNYKNASGVVNSSPRSHSATNGSIPSSSSKNEKKQKCTSKSPSTHKDLMENCIPNN. A glycan (N-linked (GlcNAc...) asparagine) is linked at asparagine 324. Serine 332 carries the phosphoserine modification. 2 N-linked (GlcNAc...) asparagine glycosylation sites follow: asparagine 340 and asparagine 452. Residues 630–664 form a disordered region; it reads TSPLSPVSPHYSSKFVETSPSGLDPNASVYQPLKK. Phosphoserine occurs at positions 631 and 634. The N-linked (GlcNAc...) asparagine glycan is linked to asparagine 655.

It belongs to the macoilin family.

Its subcellular location is the rough endoplasmic reticulum membrane. It localises to the nucleus membrane. Its function is as follows. Plays a role in the regulation of neuronal activity. The chain is Macoilin (MACO1) from Canis lupus familiaris (Dog).